Consider the following 299-residue polypeptide: Centriolar and ciliogenesis-associated protein HYLS1 (299 aa).

Phosphoserine is present on serine 179.

Belongs to the HYLS1 family.

The protein localises to the cytoplasm. It is found in the cell projection. The protein resides in the cilium. Its subcellular location is the cytoskeleton. It localises to the microtubule organizing center. The protein localises to the centrosome. It is found in the centriole. Functionally, plays a role in ciliogenesis. In Homo sapiens (Human), this protein is Centriolar and ciliogenesis-associated protein HYLS1.